We begin with the raw amino-acid sequence, 344 residues long: Uroporphyrinogen decarboxylase (344 aa).

Residues 25–29 (RQAGR), Asp-75, Tyr-152, Ser-207, and His-323 each bind substrate.

This sequence belongs to the uroporphyrinogen decarboxylase family. Homodimer.

The protein localises to the cytoplasm. The catalysed reaction is uroporphyrinogen III + 4 H(+) = coproporphyrinogen III + 4 CO2. The protein operates within porphyrin-containing compound metabolism; protoporphyrin-IX biosynthesis; coproporphyrinogen-III from 5-aminolevulinate: step 4/4. Functionally, catalyzes the decarboxylation of four acetate groups of uroporphyrinogen-III to yield coproporphyrinogen-III. The protein is Uroporphyrinogen decarboxylase of Roseobacter denitrificans (strain ATCC 33942 / OCh 114) (Erythrobacter sp. (strain OCh 114)).